An 841-amino-acid chain; its full sequence is Microcephalin (841 aa).

Residues 1 to 93 enclose the BRCT 1 domain; the sequence is MAAPILKDVV…AHIDESLFPA (93 aa). Phosphoserine is present on residues Ser-278, Ser-286, Ser-295, and Ser-332. Thr-334 bears the Phosphothreonine mark. 4 disordered regions span residues 340–375, 417–445, 481–507, and 562–593; these read GHLL…RKRS, PDNL…SCRS, SSPQ…SAPE, and VGLK…PRSV. Basic residues predominate over residues 342–358; that stretch reads LLIHSRPRSSSVKRKRV. Positions 433-445 are enriched in polar residues; sequence QLPSSPAQFSCRS. The span at 565–583 shows a compositional bias: polar residues; sequence KSTQDKGTTSKISNSSEGE. BRCT domains follow at residues 646-736 and 757-839; these read SGKG…SFEL and YRGT…NYLL.

In terms of assembly, interacts with CDC27 and maybe other components of the APC/C complex. Interacts with histone variant H2AX under DNA damage conditions.

The protein localises to the cytoplasm. It localises to the cytoskeleton. It is found in the microtubule organizing center. Its subcellular location is the centrosome. Implicated in chromosome condensation and DNA damage induced cellular responses. May play a role in neurogenesis and regulation of the size of the cerebral cortex. The polypeptide is Microcephalin (Colobus guereza (Mantled guereza)).